A 308-amino-acid chain; its full sequence is uncharacterized protein (308 aa).

A helical transmembrane segment spans residues 191–211 (YLCLNLPYIIVALTLVPYSLV).

The protein localises to the host membrane. This is an uncharacterized protein from Saccharolobus islandicus (Sulfolobus islandicus).